Here is a 455-residue protein sequence, read N- to C-terminus: Elongation factor Tu, mitochondrial (455 aa).

Residues M1–L46 constitute a mitochondrion transit peptide. Residues K58–A254 form the tr-type G domain. The tract at residues G67–T74 is G1. D70, G72, K73, T74, and T75 together coordinate GTP. Position 74 (T74) interacts with Mg(2+). K82 carries the post-translational modification N6-acetyllysine. An N6-acetyllysine; alternate modification is found at K91. K91 is modified (N6-succinyllysine; alternate). Residues G108–N112 form a G2 region. The tract at residues D129–G132 is G3. 5 residues coordinate GTP: N184, D187, S222, A223, and L224. The interval N184–D187 is G4. Residues S222 to L224 form a G5 region. K237 carries the post-translational modification N6-succinyllysine. K259 is modified (N6-acetyllysine). T281 is subject to Phosphothreonine. N6-succinyllysine is present on K289. Position 315 is a phosphoserine (S315). 2 positions are modified to N6-acetyllysine: K364 and K421.

This sequence belongs to the TRAFAC class translation factor GTPase superfamily. Classic translation factor GTPase family. EF-Tu/EF-1A subfamily. Interacts with NLRX1. Interacts with ATG16L1. As to quaternary structure, (Microbial infection) Interacts with human parainfluenza virus 3 matrix protein; this interaction inhibits RLR-mediated type I interferon production while promoting autophagy. In terms of assembly, (Microbial infection) Interacts with Hantaan hantavirus glycoprotein N; this interaction contributes to the virus-induced degradation of mitochondria by autophagy, which leads to degradation of MAVS and inhibition of type I interferon (IFN) responses.

It localises to the mitochondrion. The enzyme catalyses GTP + H2O = GDP + phosphate + H(+). In terms of biological role, GTP hydrolase that promotes the GTP-dependent binding of aminoacyl-tRNA to the A-site of ribosomes during protein biosynthesis. Also plays a role in the regulation of autophagy and innate immunity. Recruits ATG5-ATG12 and NLRX1 at mitochondria and serves as a checkpoint of the RIGI-MAVS pathway. In turn, inhibits RLR-mediated type I interferon while promoting autophagy. In Homo sapiens (Human), this protein is Elongation factor Tu, mitochondrial (TUFM).